A 351-amino-acid polypeptide reads, in one-letter code: DNA nickase (351 aa).

Fe cation contacts are provided by histidine 241, glutamate 245, and histidine 303.

Functionally, acts as a DNA nickase. The protein is DNA nickase of Nostoc sp. (strain PCC 7120 / SAG 25.82 / UTEX 2576).